Here is a 237-residue protein sequence, read N- to C-terminus: Ly6/PLAUR domain-containing protein 8 (237 aa).

The N-terminal stretch at 1–19 is a signal peptide; that stretch reads MKGILVAGITAVLVAAVES. N45, N73, N107, N118, N132, N172, N175, and N185 each carry an N-linked (GlcNAc...) asparagine glycan. The UPAR/Ly6 domain occupies 125-176; it reads CPACYESNGTSCHGKPWKCYEEEQCVFLVAELKNDIESKSLVLKGCSNVSNA. N215 is lipidated: GPI-anchor amidated asparagine. Residues 216–237 constitute a propeptide, removed in mature form; it reads VGSKASLYLLALASLLLRGLLP.

Belongs to the CNF-like-inhibitor family. Post-translationally, highly N-glycosylated. Not O-glycosylated. In terms of processing, GPI-anchored. The GPI-anchor is cleaved, leading to secretion into the colonic lumen. Expressed in the large intestine. Preferentially expressed on the epithelial layer exposed to the lumen (at protein level).

The protein localises to the cell membrane. The protein resides in the secreted. Its function is as follows. Secreted protein specifically required to prevent invasion of Gram-negative bacteria in the inner mucus layer of the colon epithelium, a portion of the large intestine which is free of commensal microbiota. Prevents invasion of flagellated microbiota by binding to the flagellum of bacteria, such as P.mirabilis, thereby inhibiting bacterial motility in the intestinal lumen. Segregation of intestinal bacteria and epithelial cells in the colon is required to preserve intestinal homeostasis. This chain is Ly6/PLAUR domain-containing protein 8, found in Homo sapiens (Human).